Consider the following 247-residue polypeptide: 3-deoxy-manno-octulosonate cytidylyltransferase (247 aa).

It belongs to the KdsB family.

The protein localises to the cytoplasm. It catalyses the reaction 3-deoxy-alpha-D-manno-oct-2-ulosonate + CTP = CMP-3-deoxy-beta-D-manno-octulosonate + diphosphate. It functions in the pathway nucleotide-sugar biosynthesis; CMP-3-deoxy-D-manno-octulosonate biosynthesis; CMP-3-deoxy-D-manno-octulosonate from 3-deoxy-D-manno-octulosonate and CTP: step 1/1. Its pathway is bacterial outer membrane biogenesis; lipopolysaccharide biosynthesis. Its function is as follows. Activates KDO (a required 8-carbon sugar) for incorporation into bacterial lipopolysaccharide in Gram-negative bacteria. This Pelodictyon phaeoclathratiforme (strain DSM 5477 / BU-1) protein is 3-deoxy-manno-octulosonate cytidylyltransferase.